The chain runs to 646 residues: ATP-dependent zinc metalloprotease FtsH (646 aa).

Positions 1-27 (MTNNQTDRPRPPGPESRRFDNNDKNNR) are disordered. At 1 to 35 (MTNNQTDRPRPPGPESRRFDNNDKNNRNRWGPIPS) the chain is on the cytoplasmic side. Positions 7 to 26 (DRPRPPGPESRRFDNNDKNN) are enriched in basic and acidic residues. Residues 36-56 (WAWIVLIVALLLNWLVAPILF) traverse the membrane as a helical segment. Over 57–144 (PEGKGAVSIP…QPESSTRSLL (88 aa)) the chain is Extracellular. The helical transmembrane segment at 145–165 (LSILISFGPTILFFLLFLWLI) threads the bilayer. At 166-646 (SKAQSSQQGL…GLGEKQPEPA (481 aa)) the chain is on the cytoplasmic side. 237–244 (GPPGTGKT) serves as a coordination point for ATP. His459 provides a ligand contact to Zn(2+). Glu460 is a catalytic residue. His463 and Asp535 together coordinate Zn(2+).

It in the central section; belongs to the AAA ATPase family. In the C-terminal section; belongs to the peptidase M41 family. As to quaternary structure, homohexamer. The cofactor is Zn(2+).

Its subcellular location is the cell membrane. Its function is as follows. Acts as a processive, ATP-dependent zinc metallopeptidase for both cytoplasmic and membrane proteins. Plays a role in the quality control of integral membrane proteins. This Thermobaculum terrenum (strain ATCC BAA-798 / CCMEE 7001 / YNP1) protein is ATP-dependent zinc metalloprotease FtsH.